The primary structure comprises 179 residues: Large ribosomal subunit protein uL5 (179 aa).

Belongs to the universal ribosomal protein uL5 family. Part of the 50S ribosomal subunit; part of the 5S rRNA/L5/L18/L25 subcomplex. Contacts the 5S rRNA and the P site tRNA. Forms a bridge to the 30S subunit in the 70S ribosome.

In terms of biological role, this is one of the proteins that bind and probably mediate the attachment of the 5S RNA into the large ribosomal subunit, where it forms part of the central protuberance. In the 70S ribosome it contacts protein S13 of the 30S subunit (bridge B1b), connecting the 2 subunits; this bridge is implicated in subunit movement. Contacts the P site tRNA; the 5S rRNA and some of its associated proteins might help stabilize positioning of ribosome-bound tRNAs. The polypeptide is Large ribosomal subunit protein uL5 (Stutzerimonas stutzeri (strain A1501) (Pseudomonas stutzeri)).